The following is a 346-amino-acid chain: Phosphoribosylformylglycinamidine cyclo-ligase (346 aa).

The protein belongs to the AIR synthase family.

The protein localises to the cytoplasm. The catalysed reaction is 2-formamido-N(1)-(5-O-phospho-beta-D-ribosyl)acetamidine + ATP = 5-amino-1-(5-phospho-beta-D-ribosyl)imidazole + ADP + phosphate + H(+). It functions in the pathway purine metabolism; IMP biosynthesis via de novo pathway; 5-amino-1-(5-phospho-D-ribosyl)imidazole from N(2)-formyl-N(1)-(5-phospho-D-ribosyl)glycinamide: step 2/2. This is Phosphoribosylformylglycinamidine cyclo-ligase from Proteus mirabilis (strain HI4320).